A 488-amino-acid polypeptide reads, in one-letter code: Sucrose 6(F)-phosphate phosphorylase (488 aa).

Sucrose 6(F)-phosphate-binding positions include D49, H87, 195-197 (RLD), E238, 295-296 (HD), 342-345 (DVHQ), and R399. D197 acts as the Nucleophile in catalysis. The active-site Proton donor/acceptor is the E238.

It belongs to the glycosyl hydrolase 13 family. Sucrose phosphorylase subfamily. Monomer.

It catalyses the reaction sucrose 6(F)-phosphate + phosphate = beta-D-fructose 6-phosphate + alpha-D-glucose 1-phosphate. Its function is as follows. Catalyzes the reversible phosphorolysis of sucrose 6(F)-phosphate into alpha-D-glucose 1-phosphate (Glc1P) and D-fructose 6-phosphate. May be involved in a new pathway for the degradation of sucrose, which could become phosphorylated on its fructose moiety during uptake via a PTS system. To a lesser extent, can also reversibly act on sucrose in vitro. Is also able to catalyze transglycosylation reactions in vitro. The protein is Sucrose 6(F)-phosphate phosphorylase of Thermoanaerobacterium thermosaccharolyticum (strain ATCC 7956 / DSM 571 / NCIMB 9385 / NCA 3814 / NCTC 13789 / WDCM 00135 / 2032) (Clostridium thermosaccharolyticum).